We begin with the raw amino-acid sequence, 85 residues long: Putative membrane protein insertion efficiency factor (85 aa).

Belongs to the UPF0161 family.

The protein localises to the cell inner membrane. In terms of biological role, could be involved in insertion of integral membrane proteins into the membrane. This chain is Putative membrane protein insertion efficiency factor, found in Escherichia fergusonii (strain ATCC 35469 / DSM 13698 / CCUG 18766 / IAM 14443 / JCM 21226 / LMG 7866 / NBRC 102419 / NCTC 12128 / CDC 0568-73).